Consider the following 338-residue polypeptide: Lipoate-protein ligase A (338 aa).

Residues 29-216 (SPDQRVLFLW…AFFAYYDEQV (188 aa)) form the BPL/LPL catalytic domain. ATP contacts are provided by residues Arg-71, 76 to 79 (GAVF), and Lys-134. Lys-134 contacts (R)-lipoate.

This sequence belongs to the LplA family. Monomer.

Its subcellular location is the cytoplasm. The enzyme catalyses L-lysyl-[lipoyl-carrier protein] + (R)-lipoate + ATP = N(6)-[(R)-lipoyl]-L-lysyl-[lipoyl-carrier protein] + AMP + diphosphate + H(+). Its pathway is protein modification; protein lipoylation via exogenous pathway; protein N(6)-(lipoyl)lysine from lipoate: step 1/2. It participates in protein modification; protein lipoylation via exogenous pathway; protein N(6)-(lipoyl)lysine from lipoate: step 2/2. In terms of biological role, catalyzes both the ATP-dependent activation of exogenously supplied lipoate to lipoyl-AMP and the transfer of the activated lipoyl onto the lipoyl domains of lipoate-dependent enzymes. The sequence is that of Lipoate-protein ligase A from Yersinia pseudotuberculosis serotype IB (strain PB1/+).